A 1940-amino-acid chain; its full sequence is Protein ORF1940 (1940 aa).

TPR repeat units lie at residues 119–153 (IKACSNAQCSPETVESNFQEAIRDYEAASSIALQY), 155–186 (FQSLAEQLSDAVNQLKTALSNYEKTVATLQQI), 480–513 (RLPDIRIGAIDAAKEKIGDLMSDFKEKISIGLHG), and 617–652 (GKSMGDKTVLTADYMEGEVLGLIKNYEADVKISPTS). Disordered stretches follow at residues 1160-1239 (PSKV…PGAV) and 1519-1571 (KGPS…TVTS). The segment covering 1164–1185 (QNTTQPSATQNTTTQPTAQNTS) has biased composition (low complexity). Polar residues predominate over residues 1186–1200 (LPGATQNTTLPTPSK). 3 stretches are compositionally biased toward low complexity: residues 1201–1235 (VQNTTQPSTTPNTTLSTPSTTPNTTTQPTVQNTSL), 1521–1539 (PSTTQNTTQPSTTPNMTPP), and 1561–1571 (TPGSGSQTVTS). The TPR 5 repeat unit spans residues 1691–1724 (KDLNKSVGTSVVEEAKYNSTLQTYLAGLGIKDLN). The segment at 1862 to 1940 (TTTHHITPPP…AEQAEQVLLI (79 aa)) is disordered. Residues 1868-1883 (TPPPPPPPPPPPPPPK) show a composition bias toward pro residues. Over residues 1884 to 1894 (TQTITTTTQIT) the composition is skewed to low complexity. Residues 1895-1912 (PPSPPPTPPPPPPPPKSP) show a composition bias toward pro residues.

The chain is Protein ORF1940 from Acidianus convivator (ATV).